We begin with the raw amino-acid sequence, 240 residues long: Lactate utilization protein C (240 aa).

The protein belongs to the LutC/YkgG family.

In terms of biological role, is involved in L-lactate degradation and allows cells to grow with lactate as the sole carbon source. This Geobacillus kaustophilus (strain HTA426) protein is Lactate utilization protein C.